A 239-amino-acid chain; its full sequence is DnaA regulatory inactivator Hda (239 aa).

Belongs to the DnaA family. HdA subfamily. In terms of assembly, the active form seems to be an ADP-bound monomer. Forms the RIDA complex (regulatory inactivation of DnaA) of ATP-DnaA, ADP-Hda and the DNA-loaded beta sliding clamp (dnaN).

Functionally, mediates the interaction of DNA replication initiator protein DnaA with DNA polymerase subunit beta sliding clamp (dnaN). Stimulates hydrolysis of ATP-DnaA to ADP-DnaA, rendering DnaA inactive for reinitiation, a process called regulatory inhibition of DnaA or RIDA. This is DnaA regulatory inactivator Hda from Yersinia enterocolitica serotype O:8 / biotype 1B (strain NCTC 13174 / 8081).